A 556-amino-acid chain; its full sequence is Protein trichome birefringence-like 1 (556 aa).

Residues Thr38–Pro58 traverse the membrane as a helical; Signal-anchor for type II membrane protein segment. Positions Gly269–Ser271 match the GDS motif motif. Positions Asp514–Asn528 match the DCXHWCLPGXXDXWN motif motif.

Belongs to the PC-esterase family. TBL subfamily. In terms of tissue distribution, not expressed in trichomes.

It is found in the membrane. Can complement TBR and is therefore functionally equivalent, but may work in different tissue. May act as a bridging protein that binds pectin and other cell wall polysaccharides. Probably involved in maintaining esterification of pectins. May be involved in the specific O-acetylation of cell wall polymers. The chain is Protein trichome birefringence-like 1 (TBL1) from Arabidopsis thaliana (Mouse-ear cress).